Reading from the N-terminus, the 249-residue chain is Large ribosomal subunit protein uL16m (249 aa).

This sequence belongs to the universal ribosomal protein uL16 family. Component of the mitochondrial large ribosomal subunit (mt-LSU). Mature N.crassa 74S mitochondrial ribosomes consist of a small (37S) and a large (54S) subunit. The 37S small subunit contains a 16S ribosomal RNA (16S mt-rRNA) and 32 different proteins. The 54S large subunit contains a 23S rRNA (23S mt-rRNA) and 42 different proteins.

The protein localises to the mitochondrion. Component of the mitochondrial ribosome (mitoribosome), a dedicated translation machinery responsible for the synthesis of mitochondrial genome-encoded proteins, including at least some of the essential transmembrane subunits of the mitochondrial respiratory chain. The mitoribosomes are attached to the mitochondrial inner membrane and translation products are cotranslationally integrated into the membrane. This chain is Large ribosomal subunit protein uL16m (mrpl16), found in Neurospora crassa (strain ATCC 24698 / 74-OR23-1A / CBS 708.71 / DSM 1257 / FGSC 987).